The following is a 1295-amino-acid chain: Unconventional myosin-VI (1295 aa).

The region spanning 2–53 is the Myosin N-terminal SH3-like domain; that stretch reads EDGRPVWAPHPTEGFQMGNIVDIGPDSLTIEPLGQKGKTFLALINQVFPAEE. In terms of domain architecture, Myosin motor spans 57–771; it reads KDVEDNCSLM…KFAEFDQIMK (715 aa). 151-158 contributes to the ATP binding site; it reads GESGAGKT. Ser-267 bears the Phosphoserine mark. A responsible for slow ATPase activity region spans residues 273 to 317; it reads YLNRGCTRYFANKETDKQILQNRKTPEHLKAGSLKDPLLDDHGDF. Phosphothreonine is present on Thr-405. Residue Ser-604 is modified to Phosphoserine. Residues 651–673 are actin-binding; that stretch reads LNLLLDKLRSTGASFIRCIKPNL. The segment at 782–810 is required for binding calmodulin; it reads KRVNHWLICSRWKKVQWCSLSVIKLKNKI. One can recognise an IQ domain in the interval 813-842; the sequence is RAEACIKMQKTIRMWLCKRRHKPRIDGLVK. Residues 835 to 916 are three-helix bundle; it reads PRIDGLVKVG…EVLLSALQKK (82 aa). An SAH region spans residues 917 to 984; the sequence is KQQEEEAERL…EDDEKRIQAE (68 aa). Positions 934–955 are disordered; that stretch reads EKERKRREEDEQRRRKEEEERR. The tract at residues 1061–1286 is interaction with TAX1BP1 and CALCOCO2/NDP52; that stretch reads KEMSEILSRG…ESRQARPTYA (226 aa). The interval 1117–1119 is interaction with OPTN; that stretch reads RRL. Ser-1156 bears the Phosphoserine mark. Positions 1158-1286 are interaction with TOM1; that stretch reads QQNPAAQLPA…ESRQARPTYA (129 aa).

The protein belongs to the TRAFAC class myosin-kinesin ATPase superfamily. Myosin family. As to quaternary structure, homodimer; dimerization seems to implicate the unfolding of the three-helix bundle region creating an additional calmodulin binding site, and cargo binding. Able to function as a monomer under specific conditions in vitro. Forms a complex with CFTR and DAB2 in the apical membrane of epithelial cells. Component of the DISP/DOCK7-induced septin displacement complex, at least composed of DOCK7, LRCH3 and MYO6. Binding to calmodulin through a unique insert, not found in other myosins, located in the neck region between the motor domain and the IQ domain appears to contribute to the directionality reversal. This interaction occurs only if the C-terminal lobe of calmodulin is occupied by calcium. Interaction with F-actin/ACTN1 occurs only at the apical brush border domain of the proximal tubule cells. Interacts with DAB2. In vitro, the C-terminal globular tail binds a C-terminal region of DAB2. Interacts with CFTR. Interacts with CABP5. Interacts (via residues 1158-1286) with TOM1 (via residues 392-463). Interacts (via residues 1060-1285) with OPTN. Interacts (via residues 1060-1285) with TAX1BP1 and CALCOCO2/NDP52. Interacts with TOM1L2. Interacts with CLIC5; may work together in a complex which also includes RDX and MYO6 to stabilize linkages between the plasma membrane and subjacent actin cytoskeleton at the base of stereocilia. Phosphorylation in the motor domain, induced by EGF, results in translocation of MYO6 from the cell surface to membrane ruffles and affects F-actin dynamics. Phosphorylated in vitro by p21-activated kinase (PAK). In terms of tissue distribution, expressed in the retina (at protein level).

It is found in the golgi apparatus. The protein resides in the trans-Golgi network membrane. It localises to the nucleus. Its subcellular location is the cytoplasm. The protein localises to the perinuclear region. It is found in the membrane. The protein resides in the clathrin-coated pit. It localises to the cytoplasmic vesicle. Its subcellular location is the clathrin-coated vesicle. The protein localises to the cell projection. It is found in the filopodium. The protein resides in the ruffle membrane. It localises to the microvillus. Its subcellular location is the cytosol. Functionally, myosins are actin-based motor molecules with ATPase activity. Unconventional myosins serve in intracellular movements. Myosin 6 is a reverse-direction motor protein that moves towards the minus-end of actin filaments. Has slow rate of actin-activated ADP release due to weak ATP binding. Functions in a variety of intracellular processes such as vesicular membrane trafficking and cell migration. Required for the structural integrity of the Golgi apparatus via the p53-dependent pro-survival pathway. Appears to be involved in a very early step of clathrin-mediated endocytosis in polarized epithelial cells. Together with TOM1, mediates delivery of endocytic cargo to autophagosomes thereby promoting autophagosome maturation and driving fusion with lysosomes. Links TOM1 with autophagy receptors, such as TAX1BP1; CALCOCO2/NDP52 and OPTN. May act as a regulator of F-actin dynamics. As part of the DISP complex, may regulate the association of septins with actin and thereby regulate the actin cytoskeleton. May play a role in transporting DAB2 from the plasma membrane to specific cellular targets. May play a role in the extension and network organization of neurites. Required for structural integrity of inner ear hair cells. Required for the correct localization of CLIC5 and RDX at the stereocilium base. Modulates RNA polymerase II-dependent transcription. The sequence is that of Unconventional myosin-VI from Bos taurus (Bovine).